The following is a 414-amino-acid chain: Bifunctional protein GlmU (414 aa).

The interval 1–208 (MDAVILCAGS…SSKLYGIELN (208 aa)) is pyrophosphorylase. UTP-binding positions include 6–9 (LCAG), Q74, and G79. N-acetyl-alpha-D-glucosamine 1-phosphate is bound by residues T80, G130, N142, and N162. The linker stretch occupies residues 209 to 228 (GYWNDIGRPWDVLSANNYFL). Residues 229–414 (KNIMPKISGN…KDELIIKKRN (186 aa)) are N-acetyltransferase. H312 acts as the Proton acceptor in catalysis. The acetyl-CoA site is built by A388 and K405.

It in the N-terminal section; belongs to the N-acetylglucosamine-1-phosphate uridyltransferase family. This sequence in the C-terminal section; belongs to the transferase hexapeptide repeat family.

The enzyme catalyses N-acetyl-alpha-D-glucosamine 1-phosphate + UTP + H(+) = UDP-N-acetyl-alpha-D-glucosamine + diphosphate. It catalyses the reaction alpha-D-glucosamine 1-phosphate + acetyl-CoA = N-acetyl-alpha-D-glucosamine 1-phosphate + CoA + H(+). It participates in nucleotide-sugar biosynthesis; UDP-N-acetyl-alpha-D-glucosamine biosynthesis; N-acetyl-alpha-D-glucosamine 1-phosphate from alpha-D-glucosamine 6-phosphate (route II): step 2/2. It functions in the pathway nucleotide-sugar biosynthesis; UDP-N-acetyl-alpha-D-glucosamine biosynthesis; UDP-N-acetyl-alpha-D-glucosamine from N-acetyl-alpha-D-glucosamine 1-phosphate: step 1/1. Catalyzes the last two sequential reactions in the de novo biosynthetic pathway for UDP-N-acetyl-glucosamine (UDP-GlcNAc). Responsible for the acetylation of GlcN-1-P to GlcNAc-1-P, and for the uridyl transfer from UTP to GlcNAc-1-P, to produce UDP-GlcNAc and pyrophosphate. This Methanococcus vannielii (strain ATCC 35089 / DSM 1224 / JCM 13029 / OCM 148 / SB) protein is Bifunctional protein GlmU.